The chain runs to 246 residues: MAVISMKQLLEAGVHFGHQTRRWNPKMAKYIFTERNGIYIIDLQKTVKKVDEAYNFVRELAAEGGNVLFVGTKKQAQDTIKEEAIRSGMFFINERWLGGTLTNFSTIKKRINRLKQLEKMEEDGTFEVLPKKEVIILKKEMTRLEKFLGGIKDMPGVPDALFIVDPRKERIAIAEAHKLNIPIVAIVDTNCDPDEIDYVIPANDDAIRAVKLLTSKMADAIIEAKQGEEEVAEEAVATEAEATEAE.

It belongs to the universal ribosomal protein uS2 family.

This is Small ribosomal subunit protein uS2 from Exiguobacterium sp. (strain ATCC BAA-1283 / AT1b).